Consider the following 266-residue polypeptide: UPF0354 protein lwe1624 (266 aa).

The protein belongs to the UPF0354 family.

The sequence is that of UPF0354 protein lwe1624 from Listeria welshimeri serovar 6b (strain ATCC 35897 / DSM 20650 / CCUG 15529 / CIP 8149 / NCTC 11857 / SLCC 5334 / V8).